The primary structure comprises 850 residues: Bifunctional levopimaradiene synthase, chloroplastic (850 aa).

The transit peptide at 1–52 (MALPSSSLSSQIHTGATTQCIPHFHGSLNAGTSAGKRRSLYLRWGKGPSKIV) directs the protein to the chloroplast. Lysine 250 is a substrate binding site. Mg(2+) contacts are provided by aspartate 383 and aspartate 385. The DXDD motif signature appears at 383 to 386 (DIDD). Residue lysine 470 participates in substrate binding. Mg(2+) is bound by residues aspartate 602, aspartate 606, asparagine 746, threonine 750, and glutamate 754. The DDXXD motif motif lies at 602–606 (DDLYD).

Belongs to the terpene synthase family. Tpsd subfamily. Mg(2+) is required as a cofactor.

The protein resides in the plastid. The protein localises to the chloroplast. It carries out the reaction (2E,6E,10E)-geranylgeranyl diphosphate = (+)-copalyl diphosphate. The catalysed reaction is (+)-copalyl diphosphate = abieta-7,13-diene + diphosphate. It catalyses the reaction (+)-copalyl diphosphate = abieta-8(14),12-diene + diphosphate. The enzyme catalyses (+)-copalyl diphosphate = neoabietadiene + diphosphate. It functions in the pathway terpene metabolism; oleoresin biosynthesis. Involved in defensive oleoresin formation in conifers in response to insect attack or other injury. Involved in diterpene (C20) olefins biosynthesis. Bifunctional enzyme that catalyzes two sequential cyclizations of geranylgeranyl diphosphate (GGPP) to levopimaradiene. Levopimaradiene is the major products of the enzyme with abietadiene and neoabietadiene. No activity with farnesyl diphosphate (FPP) as substrate. The protein is Bifunctional levopimaradiene synthase, chloroplastic of Pinus contorta (Shore pine).